A 416-amino-acid chain; its full sequence is Cysteate synthase (416 aa).

N6-(pyridoxal phosphate)lysine is present on Lys-104. Pyridoxal 5'-phosphate is bound at residue Asn-130.

Belongs to the threonine synthase family. Cysteate synthase subfamily. In terms of assembly, homotrimer. It depends on pyridoxal 5'-phosphate as a cofactor.

The enzyme catalyses O-phospho-L-serine + sulfite + H(+) = L-cysteate + phosphate. The protein operates within cofactor biosynthesis; coenzyme M biosynthesis. Its function is as follows. Specifically catalyzes the beta-elimination of phosphate from L-phosphoserine and the beta-addition of sulfite to the dehydroalanine intermediate to produce L-cysteate. The sequence is that of Cysteate synthase from Methanosarcina mazei (strain ATCC BAA-159 / DSM 3647 / Goe1 / Go1 / JCM 11833 / OCM 88) (Methanosarcina frisia).